Here is an 87-residue protein sequence, read N- to C-terminus: UPF0250 protein BUsg_472 (87 aa).

This sequence belongs to the UPF0250 family.

This Buchnera aphidicola subsp. Schizaphis graminum (strain Sg) protein is UPF0250 protein BUsg_472.